Here is a 122-residue protein sequence, read N- to C-terminus: Large ribosomal subunit protein uL14 (122 aa).

Belongs to the universal ribosomal protein uL14 family. Part of the 50S ribosomal subunit. Forms a cluster with proteins L3 and L19. In the 70S ribosome, L14 and L19 interact and together make contacts with the 16S rRNA in bridges B5 and B8.

Functionally, binds to 23S rRNA. Forms part of two intersubunit bridges in the 70S ribosome. The chain is Large ribosomal subunit protein uL14 from Rhodopirellula baltica (strain DSM 10527 / NCIMB 13988 / SH1).